Reading from the N-terminus, the 229-residue chain is MTEGNPHEQVTVTDKRRIDPDTGEVRSIPLGDTPGGSEPAGMTDRSANSTDTMVDKVAELTSDLQRVQADFANYRKRALRDQQTASDRAKATVISQLLGVLDDFDRAREHGDLDSGPLKSVADKLMSALTGLGLVAFGVEGEDFDPVLHEAVQHEGDGGEGSKPVIGDVLRHGYKLGDQVLRHALVGVVDTIAGDGAETVAIVAPVDSTAKTEQGELGDNVTPHKEDGD.

Disordered stretches follow at residues 1–49 (MTEG…SANS) and 207–229 (DSTAKTEQGELGDNVTPHKEDGD). Basic and acidic residues predominate over residues 13–24 (TDKRRIDPDTGE).

The protein belongs to the GrpE family. Homodimer.

Its subcellular location is the cytoplasm. In terms of biological role, participates actively in the response to hyperosmotic and heat shock by preventing the aggregation of stress-denatured proteins, in association with DnaK and GrpE. It is the nucleotide exchange factor for DnaK and may function as a thermosensor. Unfolded proteins bind initially to DnaJ; upon interaction with the DnaJ-bound protein, DnaK hydrolyzes its bound ATP, resulting in the formation of a stable complex. GrpE releases ADP from DnaK; ATP binding to DnaK triggers the release of the substrate protein, thus completing the reaction cycle. Several rounds of ATP-dependent interactions between DnaJ, DnaK and GrpE are required for fully efficient folding. The sequence is that of Protein GrpE from Mycobacterium leprae (strain TN).